Consider the following 246-residue polypeptide: MTGTISAPLYLLRGLQLIGWRDMQHALDYLYADGALREGTLVAINAEKMLAVEDNPEVRALIEAAEFKYADGISVVRSLRKKYPQAQVSRVAGADLWEALMQRAGAEGTPVFLVGGKPEVLTQTESRLRQRWQVNIVGSQDGYFTPEQRQTLFERIRDSGAKIVTVAMGSPRQEIFMRDCRRLYPHALYMGVGGTYDVFTGHVHRAPKFWQDLGLEWFYRLLLQPSRIKRQFRLLRYLRWHYTGKL.

This sequence belongs to the glycosyltransferase 26 family.

The catalysed reaction is UDP-N-acetyl-alpha-D-mannosaminouronate + N-acetyl-alpha-D-glucosaminyl-di-trans,octa-cis-undecaprenyl diphosphate = beta-D-ManNAcA-(1-&gt;4)-alpha-D-GlcNAc-di-trans,octa-cis-undecaprenyl diphosphate + UDP + H(+). It participates in bacterial outer membrane biogenesis; enterobacterial common antigen biosynthesis. Catalyzes the synthesis of Und-PP-GlcNAc-ManNAcA (Lipid II), the second lipid-linked intermediate involved in enterobacterial common antigen (ECA) synthesis. The chain is UDP-N-acetyl-D-mannosaminuronic acid transferase from Klebsiella pneumoniae (strain 342).